We begin with the raw amino-acid sequence, 324 residues long: MYG1 protein C694.04c (324 aa).

Belongs to the MYG1 family.

This Schizosaccharomyces pombe (strain 972 / ATCC 24843) (Fission yeast) protein is MYG1 protein C694.04c.